A 257-amino-acid polypeptide reads, in one-letter code: Thiazole synthase (257 aa).

The Schiff-base intermediate with DXP role is filled by K99. 1-deoxy-D-xylulose 5-phosphate-binding positions include G160, 186 to 187, and 208 to 209; these read AG and NT.

This sequence belongs to the ThiG family. Homotetramer. Forms heterodimers with either ThiH or ThiS.

Its subcellular location is the cytoplasm. The catalysed reaction is [ThiS sulfur-carrier protein]-C-terminal-Gly-aminoethanethioate + 2-iminoacetate + 1-deoxy-D-xylulose 5-phosphate = [ThiS sulfur-carrier protein]-C-terminal Gly-Gly + 2-[(2R,5Z)-2-carboxy-4-methylthiazol-5(2H)-ylidene]ethyl phosphate + 2 H2O + H(+). It participates in cofactor biosynthesis; thiamine diphosphate biosynthesis. Functionally, catalyzes the rearrangement of 1-deoxy-D-xylulose 5-phosphate (DXP) to produce the thiazole phosphate moiety of thiamine. Sulfur is provided by the thiocarboxylate moiety of the carrier protein ThiS. In vitro, sulfur can be provided by H(2)S. This is Thiazole synthase from Thermodesulfovibrio yellowstonii (strain ATCC 51303 / DSM 11347 / YP87).